The chain runs to 314 residues: 3'-5' exoribonuclease YhaM (314 aa).

The 117-residue stretch at 163–279 folds into the HD domain; sequence HVVSMLDLAK…LHYIDNLDAK (117 aa).

Belongs to the YhaM family.

In terms of biological role, shows a 3'-5' exoribonuclease activity. The chain is 3'-5' exoribonuclease YhaM from Bacillus cereus (strain AH820).